Reading from the N-terminus, the 532-residue chain is UDP-glucuronosyltransferase 1A6 (532 aa).

The signal sequence occupies residues 1 to 26 (MACLLRSFQRISAGVFFLALWGMVVG). N294 and N346 each carry an N-linked (GlcNAc...) asparagine glycan. The helical transmembrane segment at 490-506 (VIGFLLAVVLTVAFITF) threads the bilayer.

The protein belongs to the UDP-glycosyltransferase family. In terms of assembly, isoform 1 interacts with isoform 3/i2 suggesting that oligomerization is involved in negative regulation of transferase activity by isoform 3. Isoform 1 also interacts with respective i2 isoforms of UGT1A1, UGT1A3, UGT1A4, UGT1A7, UGT1A8, UGT1A9 and UGT1A10. Expressed in skin. Isoforms 1 and 3 are expressed in kidney and liver. Isoform 1 but not isoform 2 is expressed in colon, esophagus and small intestine.

It is found in the microsome. It localises to the endoplasmic reticulum membrane. The catalysed reaction is glucuronate acceptor + UDP-alpha-D-glucuronate = acceptor beta-D-glucuronoside + UDP + H(+). The enzyme catalyses (5Z,8Z,11Z,14Z)-eicosatetraenoate + UDP-alpha-D-glucuronate = O-[(5Z),(8Z),(11Z),(14Z)-eicosatetraenoyl]-beta-D-glucuronate + UDP. It catalyses the reaction 15-hydroxy-(5Z,8Z,11Z,13E)-eicosatetraenoate + UDP-alpha-D-glucuronate = 15-O-(beta-D-glucuronosyl)-(5Z,8Z,11Z,14Z)-eicosatetraenoate + UDP + H(+). It carries out the reaction (E)-ferulate + UDP-alpha-D-glucuronate = (E)-4-O-(beta-D-glucuronosyl)-ferulate + UDP + H(+). The catalysed reaction is (E)-ferulate + UDP-alpha-D-glucuronate = (E)-ferulic acid beta-D-glucuronate ester + UDP. Functionally, UDP-glucuronosyltransferase (UGT) that catalyzes phase II biotransformation reactions in which lipophilic substrates are conjugated with glucuronic acid to facilitate their inactivation and excretion from the body. Essential for the elimination and detoxification of drugs, xenobiotics and endogenous compounds. Involved in the glucuronidation of arachidonic acid (AA) and AA-derived eicosanoids including 15-HETE and 20-HETE. Conjugates small planar phenolic molecules such as 4-nitrophenol, 1-naphthol, and 4-methylumbelliferone. The bulky phenol 4-hydroxybiphenyl, androgens and estrogens are not substrates. 2-hydroxybiphenyl is an excellent substrate. Involved in the glucuronidation of the phytochemical ferulic acid at the phenolic or the carboxylic acid group. Its function is as follows. Isoform 3 lacks transferase activity but acts as a negative regulator of isoform 1. This Homo sapiens (Human) protein is UDP-glucuronosyltransferase 1A6.